Reading from the N-terminus, the 380-residue chain is MKNISLLGASGSIGTQTLDVLRSHPDQFRLVAFSVGKNIDYAVKVIQEFSPQIVSVQREEDVLKLQAVSGNTKIVYGNEGLLEVALHPDAEIVVNAVVGSVGLLPTLRAIEAKKTIGIANKETLVTAGHLVMEAARKHNVSLLPVDSEHSAIFQCLNGENEKRISRLIITASGGSFRDKTRDELHHVTVEDALRHPNWSMGSKITIDSATMMNKGLEVIEAHWLFGIPYEQIDVVLHKESIIHSMVEFEDRSVMAQLGSPDMRVPIQYALTYPDRLPLSDTKQLNLWEIGTLHFEKMNQERFRCLRFAYEAGKAGGSMPAVMNAANEVAVEAFLQKRIGFLTVEDLIEKAMNHHNVIARPSLEEILEIDAATRRFVMEQI.

8 residues coordinate NADPH: Ser-10, Gly-11, Ser-12, Ile-13, Gly-36, Lys-37, Asn-38, and Asn-120. Lys-121 lines the 1-deoxy-D-xylulose 5-phosphate pocket. NADPH is bound at residue Glu-122. Asp-146 is a binding site for Mn(2+). 1-deoxy-D-xylulose 5-phosphate contacts are provided by Ser-147, Glu-148, Ser-172, and His-195. Glu-148 contributes to the Mn(2+) binding site. Gly-201 is a binding site for NADPH. Positions 208, 213, 214, and 217 each coordinate 1-deoxy-D-xylulose 5-phosphate. Glu-217 contacts Mn(2+).

Belongs to the DXR family. The cofactor is Mg(2+). It depends on Mn(2+) as a cofactor.

The catalysed reaction is 2-C-methyl-D-erythritol 4-phosphate + NADP(+) = 1-deoxy-D-xylulose 5-phosphate + NADPH + H(+). Its pathway is isoprenoid biosynthesis; isopentenyl diphosphate biosynthesis via DXP pathway; isopentenyl diphosphate from 1-deoxy-D-xylulose 5-phosphate: step 1/6. Functionally, catalyzes the NADPH-dependent rearrangement and reduction of 1-deoxy-D-xylulose-5-phosphate (DXP) to 2-C-methyl-D-erythritol 4-phosphate (MEP). The protein is 1-deoxy-D-xylulose 5-phosphate reductoisomerase 2 of Bacillus thuringiensis subsp. konkukian (strain 97-27).